Reading from the N-terminus, the 257-residue chain is Ribosomal RNA small subunit methyltransferase J (257 aa).

S-adenosyl-L-methionine-binding positions include 107 to 108, 123 to 124, and Asp177; these read RD and ER.

Belongs to the methyltransferase superfamily. RsmJ family.

The protein localises to the cytoplasm. The catalysed reaction is guanosine(1516) in 16S rRNA + S-adenosyl-L-methionine = N(2)-methylguanosine(1516) in 16S rRNA + S-adenosyl-L-homocysteine + H(+). Specifically methylates the guanosine in position 1516 of 16S rRNA. The sequence is that of Ribosomal RNA small subunit methyltransferase J from Haemophilus influenzae (strain PittGG).